The following is a 65-amino-acid chain: Large ribosomal subunit protein bL28 (65 aa).

The interval Met1–Ser21 is disordered.

This sequence belongs to the bacterial ribosomal protein bL28 family.

In Mycoplasma pneumoniae (strain ATCC 29342 / M129 / Subtype 1) (Mycoplasmoides pneumoniae), this protein is Large ribosomal subunit protein bL28.